Here is a 612-residue protein sequence, read N- to C-terminus: MPAFRSRTSTHGRNMAGARGLWRATGVKDSDFGKPIIAIVNSFTQFVPGHVHLKDLGQLVAREVEAAGGIAKEFNTIAVDDGIAMGHDGMLYSLPSRELIADSVEYMVNAHCADAMVCISNCDKITPGMLMAAMRLNIPAVFVSGGPMEAGKVTLGDGRTVKMDLIDAMVAAADEKVSDDDLTRIEQAACPTCGSCSGMFTANSMNCLTEALGLSLPGNGSTLATHAYRKELFLEAGRRAVELCRRYYEQEDEGVLPRAIATKEAFENAMALDIAMGGSTNTVLHILAAAQEGGVDFTMDDIDALSRRVPCLCKVAPNKADVHIEDVHRAGGIMSILGELDRGGLLHRDTRTVHAPTLGAAIDQWDIGRSNAPEARELFLAAPGGVPTQVAFSQSSTWDTLDTDRETGVIRSVATPFSKDGGLAVLKGNLAPDGCIVKTAGVDESILVFAGPAKVFESQDAAVYGILNGGVQAGDVVVIRYEGPKGGPGMQEMLYPTSYLKSKGLGKACALITDGRFSGGTSGLSIGHASPEAASGGPIGLVREGDRIEIDIPNRTITLAVPEAELAARRAEQDAKGWKPAGPRKRKVSQALKVYAQFASSADKGAVRVLPE.

A Mg(2+)-binding site is contributed by aspartate 81. A [2Fe-2S] cluster-binding site is contributed by cysteine 122. 2 residues coordinate Mg(2+): aspartate 123 and lysine 124. Lysine 124 carries the N6-carboxylysine modification. Cysteine 196 contributes to the [2Fe-2S] cluster binding site. Glutamate 492 contributes to the Mg(2+) binding site. The active-site Proton acceptor is the serine 518.

Belongs to the IlvD/Edd family. As to quaternary structure, homodimer. It depends on [2Fe-2S] cluster as a cofactor. Mg(2+) is required as a cofactor.

The enzyme catalyses (2R)-2,3-dihydroxy-3-methylbutanoate = 3-methyl-2-oxobutanoate + H2O. It carries out the reaction (2R,3R)-2,3-dihydroxy-3-methylpentanoate = (S)-3-methyl-2-oxopentanoate + H2O. It participates in amino-acid biosynthesis; L-isoleucine biosynthesis; L-isoleucine from 2-oxobutanoate: step 3/4. It functions in the pathway amino-acid biosynthesis; L-valine biosynthesis; L-valine from pyruvate: step 3/4. Functions in the biosynthesis of branched-chain amino acids. Catalyzes the dehydration of (2R,3R)-2,3-dihydroxy-3-methylpentanoate (2,3-dihydroxy-3-methylvalerate) into 2-oxo-3-methylpentanoate (2-oxo-3-methylvalerate) and of (2R)-2,3-dihydroxy-3-methylbutanoate (2,3-dihydroxyisovalerate) into 2-oxo-3-methylbutanoate (2-oxoisovalerate), the penultimate precursor to L-isoleucine and L-valine, respectively. The polypeptide is Dihydroxy-acid dehydratase (Cereibacter sphaeroides (strain ATCC 17029 / ATH 2.4.9) (Rhodobacter sphaeroides)).